The primary structure comprises 503 residues: Na(+)-translocating NADH-quinone reductase subunit B (503 aa).

3 helical membrane passes run 55 to 75 (MMLV…NSGL), 120 to 142 (IFLP…FAII), and 160 to 180 (LILP…FGVV). At T248 the chain carries FMN phosphoryl threonine. The next 5 membrane-spanning stretches (helical) occupy residues 361 to 381 (TSTV…IASW), 384 to 404 (MLSF…MSIL), 417 to 437 (FFIP…LVFM), 452 to 472 (WLYG…NPAY), and 475 to 495 (GVML…NIAL).

Belongs to the NqrB/RnfD family. Composed of six subunits; NqrA, NqrB, NqrC, NqrD, NqrE and NqrF. It depends on FMN as a cofactor.

Its subcellular location is the cell inner membrane. It carries out the reaction a ubiquinone + n Na(+)(in) + NADH + H(+) = a ubiquinol + n Na(+)(out) + NAD(+). In terms of biological role, NQR complex catalyzes the reduction of ubiquinone-1 to ubiquinol by two successive reactions, coupled with the transport of Na(+) ions from the cytoplasm to the periplasm. NqrA to NqrE are probably involved in the second step, the conversion of ubisemiquinone to ubiquinol. In Chlamydia trachomatis serovar A (strain ATCC VR-571B / DSM 19440 / HAR-13), this protein is Na(+)-translocating NADH-quinone reductase subunit B.